Consider the following 239-residue polypeptide: tRNA1(Val) (adenine(37)-N6)-methyltransferase (239 aa).

The protein belongs to the methyltransferase superfamily. tRNA (adenine-N(6)-)-methyltransferase family.

It localises to the cytoplasm. It catalyses the reaction adenosine(37) in tRNA1(Val) + S-adenosyl-L-methionine = N(6)-methyladenosine(37) in tRNA1(Val) + S-adenosyl-L-homocysteine + H(+). Functionally, specifically methylates the adenine in position 37 of tRNA(1)(Val) (anticodon cmo5UAC). The protein is tRNA1(Val) (adenine(37)-N6)-methyltransferase of Vibrio vulnificus (strain CMCP6).